A 25-amino-acid polypeptide reads, in one-letter code: Bifunctional chitinase/lysozyme (25 aa).

It belongs to the glycosyl hydrolase 19 family. Chitinase class I subfamily. As to quaternary structure, monomer.

Its subcellular location is the secreted. It localises to the extracellular space. The enzyme catalyses Random endo-hydrolysis of N-acetyl-beta-D-glucosaminide (1-&gt;4)-beta-linkages in chitin and chitodextrins.. The catalysed reaction is Hydrolysis of (1-&gt;4)-beta-linkages between N-acetylmuramic acid and N-acetyl-D-glucosamine residues in a peptidoglycan and between N-acetyl-D-glucosamine residues in chitodextrins.. Its function is as follows. Bifunctional enzyme with lysozyme/chitinase activity. The chain is Bifunctional chitinase/lysozyme from Carica papaya (Papaya).